The primary structure comprises 554 residues: MLARQRVKRANPEQLYKTCKATGGDCPPDVIKRYEQTTPADSILKYGSVGVFFGGLGIGTGRGGGGTVLGAGAVGGRPSISSGAIGPRDILPIESGGPSLAEEIPLLPMAPRVPRPTDPFRPSVLEEPFIIRPPERPNILHEQRFPTDAAPFDNGNTEITTIPSQYDVSGGGVDIQIIELPSVNDPGPSVVTRTQYNNPTFEVEVSTDISGETSSTDNIIVGAESGGTSVGDNAELIPLLDISRGDTIDTTILAPGEEETAFVTSTPERVPIQERLPIRPYGRQYQQVRVTDPEFLDSAAVLVSLENPVFDADITLTFEDDLQQALRSDTDLRDVRRLSRPYYQRRTTGLRVSRLGQRRGTISTRSGVQVGSAAHFFQDISPIGQAIEPIDAIELDVLGEQSGEGTIVRGDPTPSIEQDIGLTALGDNIENELQEIDLLTADGEEDQEGRDLQLVFSTGNDEVVDIMTIPIRAGGDDRPSVFIFSDDGTHIVYPTSTTATTPLVPAQPSDVPYIVVDLYSGSMDYDIHPSLLRRKRKKRKRVYFSDGRVASRPK.

Positions 2-10 match the Nuclear localization signal motif; that stretch reads LARQRVKRA. A disulfide bridge connects residues Cys19 and Cys26. A Nuclear localization signal motif is present at residues 533–540; it reads RRKRKKRK.

Belongs to the papillomaviridae L2 protein family. Interacts with major capsid protein L1. Interacts with E2; this interaction inhibits E2 transcriptional activity but not the DNA replication function E2. Interacts with host GADD45GIP1. Interacts with host HSPA8; this interaction is required for L2 nuclear translocation. Interacts with host importins KPNB2 and KPNB3. Forms a complex with importin alpha2-beta1 heterodimers via interaction with the importin alpha2 adapter. Interacts with host DYNLT1; this interaction is essential for virus intracellular transport during entry. Interacts (via C-terminus) with host retromer subunits VPS35 and VPS29. In terms of processing, highly phosphorylated.

It localises to the virion. The protein localises to the host nucleus. Its subcellular location is the host early endosome. It is found in the host Golgi apparatus. Functionally, minor protein of the capsid that localizes along the inner surface of the virion, within the central cavities beneath the L1 pentamers. Plays a role in capsid stabilization through interaction with the major capsid protein L1. Once the virion enters the host cell, L2 escorts the genomic DNA into the nucleus by promoting escape from the endosomal compartments and traffic through the host Golgi network. Mechanistically, the C-terminus of L2 possesses a cell-penetrating peptide that protudes from the host endosome, interacts with host cytoplasmic retromer cargo and thereby mediates the capsid delivery to the host trans-Golgi network. Plays a role through its interaction with host dynein in the intracellular microtubule-dependent transport of viral capsid toward the nucleus. Mediates the viral genome import into the nucleus through binding to host importins. Once within the nucleus, L2 localizes viral genomes to host PML bodies in order to activate early gene expression for establishment of infection. Later on, promotes late gene expression by interacting with the viral E2 protein and by inhibiting its transcriptional activation functions. During virion assembly, encapsidates the genome by direct interaction with the viral DNA. This chain is Minor capsid protein L2, found in Homo sapiens (Human).